The sequence spans 173 residues: Calcium-binding protein 5 (173 aa).

EF-hand domains follow at residues 28 to 63, 82 to 99, 105 to 140, and 142 to 173; these read DELD…MGYM, GRVD…KLLA, IGVQ…LLGE, and LTPR…MMSR. Ca(2+) contacts are provided by aspartate 41, aspartate 43, aspartate 45, and aspartate 52. Ca(2+) is bound by residues aspartate 118, asparagine 120, aspartate 122, glutamate 124, glutamate 129, aspartate 155, asparagine 157, aspartate 159, threonine 161, and glutamate 166.

As to quaternary structure, interacts with CACNA1C (via C-terminal CDB motif) in a calcium-dependent manner. Interacts with STXBP1. Interacts with MYO6. Expressed in inner and outer plexiform layers of the retina, and retinal bipolar cells (at protein level). Expressed in the inner hair cells (IHC) of the cochlea.

It is found in the cytoplasm. Its function is as follows. Inhibits calcium-dependent inactivation of L-type calcium channel and shifts voltage dependence of activation to more depolarized membrane potentials. Involved in the transmission of light signals. May positively regulate neurotransmitter vesicle endocytosis and exocytosis in a salt-dependent manner. May play a role in the extension and network organization of neurites. This is Calcium-binding protein 5 (Cabp5) from Mus musculus (Mouse).